Here is a 104-residue protein sequence, read N- to C-terminus: Phosphoribosyl-ATP pyrophosphatase (104 aa).

It belongs to the PRA-PH family.

The protein localises to the cytoplasm. The enzyme catalyses 1-(5-phospho-beta-D-ribosyl)-ATP + H2O = 1-(5-phospho-beta-D-ribosyl)-5'-AMP + diphosphate + H(+). It functions in the pathway amino-acid biosynthesis; L-histidine biosynthesis; L-histidine from 5-phospho-alpha-D-ribose 1-diphosphate: step 2/9. This chain is Phosphoribosyl-ATP pyrophosphatase, found in Streptococcus gordonii (strain Challis / ATCC 35105 / BCRC 15272 / CH1 / DL1 / V288).